Here is a 120-residue protein sequence, read N- to C-terminus: Small ribosomal subunit protein uS13 (120 aa).

The segment at 93–120 (RKGLPVRGQTTKNNARTRKGKKKTVGSK) is disordered. Residues 107 to 120 (ARTRKGKKKTVGSK) are compositionally biased toward basic residues.

This sequence belongs to the universal ribosomal protein uS13 family. As to quaternary structure, part of the 30S ribosomal subunit. Forms a loose heterodimer with protein S19. Forms two bridges to the 50S subunit in the 70S ribosome.

Functionally, located at the top of the head of the 30S subunit, it contacts several helices of the 16S rRNA. In the 70S ribosome it contacts the 23S rRNA (bridge B1a) and protein L5 of the 50S subunit (bridge B1b), connecting the 2 subunits; these bridges are implicated in subunit movement. Contacts the tRNAs in the A and P-sites. The sequence is that of Small ribosomal subunit protein uS13 from Helicobacter acinonychis (strain Sheeba).